A 699-amino-acid polypeptide reads, in one-letter code: Fervidolysin (699 aa).

An N-terminal signal peptide occupies residues 1–21 (MRKVLLIASIVALILALFSCA). Residues 22–149 (NPSFEPRSKA…MYKIRKPGLN (128 aa)) constitute a propeptide that is removed on maturation. Glutamate 157 is a Ca(2+) binding site. In terms of domain architecture, Peptidase S8 spans 163-465 (LWGLEAIGVT…YGLVKLDAAL (303 aa)). The Charge relay system role is filled by aspartate 190. Aspartate 199 serves as a coordination point for Ca(2+). Histidine 228 (charge relay system) is an active-site residue. Ca(2+) is bound by residues lysine 239, aspartate 241, lysine 243, and isoleucine 245. Serine 409 serves as the catalytic Charge relay system.

The protein belongs to the peptidase S8 family. In terms of processing, undergoes auto-proteolytic processing. Once cleaved, the propeptide can remain associated with the protease and blocks its activity. The physiological activation of fervidolysin is proposed to be achieved through the stepwise removal of the propeptide accomplished by several proteolytic cleavages that may not be autolytic.

It localises to the cell surface. With respect to regulation, is inhibited by phenylmethylsulfonyl fluoride and 3,4-dichloroisocoumarin. EDTA and iodoacetate (1 to 5 mM) have only little effect on the enzyme activity. Protease able to degrade keratin into peptides. Is responsible for keratinolysis by F.pennivorans, which allows this bacterium to grow on native feathers. This Fervidobacterium pennivorans protein is Fervidolysin.